The chain runs to 261 residues: uncharacterized protein (261 aa).

The next 2 helical transmembrane spans lie at 4–21 and 33–55; these read RLIA…LIVL and FSIL…LVLF.

The protein localises to the cell membrane. This is an uncharacterized protein from Archaeoglobus fulgidus (strain ATCC 49558 / DSM 4304 / JCM 9628 / NBRC 100126 / VC-16).